The chain runs to 64 residues: Alpha-mammal toxin Lqh2 (64 aa).

The LCN-type CS-alpha/beta domain occupies 2–64 (KDGYIVDDVN…VRTKGPGRCR (63 aa)). 4 cysteine pairs are disulfide-bonded: Cys-12/Cys-63, Cys-16/Cys-36, Cys-22/Cys-46, and Cys-26/Cys-48. Position 64 is an arginine amide (Arg-64).

Belongs to the long (4 C-C) scorpion toxin superfamily. Sodium channel inhibitor family. Alpha subfamily. As to expression, expressed by the venom gland.

The protein resides in the secreted. Alpha toxins bind voltage-independently at site-3 of sodium channels (Nav) and inhibit the inactivation of the activated channels, thereby blocking neuronal transmission. The dissociation is voltage-dependent. Is active on mammals and competes for alpha-toxins binding on both mammalian and cockroach sodium channels. The sequence is that of Alpha-mammal toxin Lqh2 from Leiurus hebraeus (Hebrew deathstalker scorpion).